Here is a 146-residue protein sequence, read N- to C-terminus: Large ribosomal subunit protein uL15 (146 aa).

A compositionally biased stretch (basic and acidic residues) spans 1–13 (MKLHELKPAEGSR). The tract at residues 1–60 (MKLHELKPAEGSRKQRNRVGRGIGSGNGKTAGKGHKGQNARSGGGVRPGFEGGQNPLFRR) is disordered. Gly residues-rich tracts occupy residues 21-31 (RGIGSGNGKTA) and 42-52 (SGGGVRPGFEG).

The protein belongs to the universal ribosomal protein uL15 family. Part of the 50S ribosomal subunit.

Functionally, binds to the 23S rRNA. This chain is Large ribosomal subunit protein uL15, found in Lysinibacillus sphaericus (strain C3-41).